Reading from the N-terminus, the 130-residue chain is U-scoloptoxin(17)-Er1a (130 aa).

The signal sequence occupies residues 1 to 18; sequence MKLLVFALFLQVVQLSLA.

Belongs to the scoloptoxin-17 family. Post-translationally, contains 4 disulfide bonds. As to expression, expressed by the venom gland.

It localises to the secreted. This chain is U-scoloptoxin(17)-Er1a, found in Ethmostigmus rubripes (Giant centipede).